Reading from the N-terminus, the 261-residue chain is MSESLHLTRNGPILEITLDRPKANAIDAKTSFAMGEAFLNFRDDPELRVAIITGGGEKFFSAGWDLKAAAEGEAPDADFGPGGFAGLTEIFDLDKPVIAAVNGYAFGGGFELALAADFIVCAENASFALPEAKLGIVPDSGGVLRLPKLLPPAIVNEMVMTGRRMSAEEALRWGIVNRVVSQSELMDSARELAQQLVNSAPLAIAALKEIYRATSEMPVEEGYRYIRSGVLKHYPSVLHSEDALEGPQAFAEKRDPVWKGR.

Catalysis depends on glutamate 111, which acts as the Nucleophile. The active-site Proton acceptor is glutamate 131.

This sequence belongs to the enoyl-CoA hydratase/isomerase family.

The catalysed reaction is (R)-carnitinyl-CoA = crotonobetainyl-CoA + H2O. The protein operates within amine and polyamine metabolism; carnitine metabolism. Its function is as follows. Catalyzes the reversible dehydration of L-carnitinyl-CoA to crotonobetainyl-CoA. This chain is Carnitinyl-CoA dehydratase, found in Salmonella paratyphi C (strain RKS4594).